The primary structure comprises 186 residues: Ribosome-recycling factor (186 aa).

It belongs to the RRF family.

The protein resides in the cytoplasm. In terms of biological role, responsible for the release of ribosomes from messenger RNA at the termination of protein biosynthesis. May increase the efficiency of translation by recycling ribosomes from one round of translation to another. This chain is Ribosome-recycling factor, found in Cytophaga hutchinsonii (strain ATCC 33406 / DSM 1761 / CIP 103989 / NBRC 15051 / NCIMB 9469 / D465).